We begin with the raw amino-acid sequence, 1817 residues long: MDLSAVRIQEVQNVLHAMQKILECPICLELIKEPVSTQCDHIFCKFCMLKLLNQKKGPSQCPLCKNEITKRSLQGSARFSQLVEELLKIIDAFELDTGMQCANGFSFSKKKNSSSELLNEDASIIQSVGYRNRVKKLQQIESGSATLKDSLSVQLSNLGIVRSMKKNRQTQPQNKSVYIALESDSSEERVNAPDGCSVRDQELFQIAPGGAGDEGKLNSAKKAACDFSEGIRNIEHHQCSDKDLNPTENHATERHPEKCPRISVANVHVEPCGTDARASSLQRGTRSLLFTEDRLDAEKAEFCDRSKQSGAAVSQQSRWADSKETCNGRPVPRTEGKADPNVDSLCGRKQWNHPKSLCPENSGATTDVPWITLNSSIQKVNEWFSRTGEMLTSDNASDRRPASNAEAAVVLEVSNEVDGCFSSSKKIDLVAPDPDNAVMCTSGRDFSKPVENIINDKIFGKTYQRKGSRPHLNHVTEIIGTFTTEPQIIQEQPFTNKLKRKRSTCLHPEDFIKKADLTVVQRISENLNQGTDQMEPNDQAMSITSNGQENRATGNDLQRGRNAHPIESLRKEPAFTAKAKSISNSISDLEVELNVHSSKAPKKNRLRRKSTRCVLPLEPISRNPSPPTCAELQIESCGSSEETKKNNSNQTPAGHIREPQLIEDTEPAADAKKNEPNEHIRKRSASDAFPEEKLMNKAGLLTSCSSPRKPQGPVNPSPERKGIEQLEMCQMPDNNKELGDLVLGGEPSGKPTEPSEESTSVSLVPDTDYDTQNSVSILEANTVRYARTGSVQCMTQFVASENPKELVHGSNNAGSGSECFKHPLRHELNHNQETIEMEDSELDTQYLQNTFQVSKRQSFALFSKLRSPQKDCTLVGARSVPSREPSPKVTSRGEQKERQGQEESEISHVQAVTVTVGLPVPCQEGKPGAVTMCADVSRLCPSSHYRSCENGLNTTDKSGISQNSHFRQSVSPLRSSIKTDNRKTLTEGRFEKHTERGMGNETAVQSTIHTISLNNRGDACLEASSGSVIEVHSTGENVQGQLDRNRGPKVNTVSLLDSTQPGVSKQSAPVSDKYLEIKQESKAVSADFSPCLFSDHLEKPMRSDKTFQVCSETPDDLLDDVEIQENASFGEGGITEKSAIFNGSVLRRESSRSPSPVTHASKSRSLHRGSRKLEFSEESDSTEDEDLPCFQHLLSRVSSTPELTRCSSVVTQRVPEKAKGTQAPRKSSISDCNNEVILGEASQEYQFSEDAKCSGSMFSSQHSAALGSPANALSQDPDFNPPSKQRRHQAENEEAFLSDKELISDHEDMAACLEEASDQEEDSIIPDSVASGYESEANLSEDCSQSDILTTQQRATMKDNLIKLQQEMAQLEAVLEQHGSQPSGHPPCLPADPCALEDLPDPEQNRSGTAILTSKNINENPVSQNPKRACDDKSQPQPPDGLPSGDKESGMRRPSPFKSPLTSSRCSARGHSRSLQNRNSTSQEELLQPAXLEKSCEPHNLTGRSCLPRQDLEGTPYPESGIRLVSSRDPDSESPKVSALVCTAPASTSALKISQGQVAGSCRSPAAGGADTAVVEIVSKIKPEVTSPKERAERDISMVVSGLTPKEVMIVQKFAEKYRLALTDVITEETTHVIIKTDAEFVCERTLKYFLGIAGGKWIVSYSWVIKSIQERKLLSVHEFEVKGDVVTGSNHQGPRRSRESQEKLFEGLQIYCCEPFTNMPKDELERMLQLCGASVVKELPLLTRDTGAHPIVLVQPSAWTEDNDCPDIGQLCKGRLVMWDWVLDSISVYRCRDLDAYLVQNITCGRDGSEPQDSND.

An N-acetylmethionine modification is found at Met-1. Residues 24-65 (CPICLELIKEPVSTQCDHIFCKFCMLKLLNQKKGPSQCPLCK) form an RING-type zinc finger. Residue Lys-109 forms a Glycyl lysine isopeptide (Lys-Gly) (interchain with G-Cter in SUMO2) linkage. Residue Ser-114 is modified to Phosphoserine. Lys-299 participates in a covalent cross-link: Glycyl lysine isopeptide (Lys-Gly) (interchain with G-Cter in SUMO2). Residues 305–346 (RSKQSGAAVSQQSRWADSKETCNGRPVPRTEGKADPNVDSLC) form a disordered region. Over residues 308–319 (QSGAAVSQQSRW) the composition is skewed to polar residues. Residues 320-340 (ADSKETCNGRPVPRTEGKADP) show a composition bias toward basic and acidic residues. Lys-337 is covalently cross-linked (Glycyl lysine isopeptide (Lys-Gly) (interchain with G-Cter in SUMO2)). At Ser-393 the chain carries Phosphoserine. Lys-457 participates in a covalent cross-link: Glycyl lysine isopeptide (Lys-Gly) (interchain with G-Cter in SUMO2). The short motif at 497-503 (KLKRKRS) is the Nuclear localization signal element. Residues Lys-513 and Lys-578 each participate in a glycyl lysine isopeptide (Lys-Gly) (interchain with G-Cter in SUMO2) cross-link. Over residues 640–652 (SEETKKNNSNQTP) the composition is skewed to polar residues. 4 disordered regions span residues 640–720 (SEET…SPER), 735–768 (NKEL…PDTD), 874–907 (LVGA…SEIS), and 959–982 (GISQ…TDNR). Positions 669-679 (ADAKKNEPNEH) are enriched in basic and acidic residues. Residues Ser-686, Ser-706, and Ser-717 each carry the phosphoserine modification. Positions 744–760 (GGEPSGKPTEPSEESTS) are enriched in low complexity. The span at 891–901 (SRGEQKERQGQ) shows a compositional bias: basic and acidic residues. A compositionally biased stretch (polar residues) spans 959–976 (GISQNSHFRQSVSPLRSS). Ser-975 is subject to Phosphoserine; by CHEK2. Lys-1049 is covalently cross-linked (Glycyl lysine isopeptide (Lys-Gly) (interchain with G-Cter in SUMO2)). Residues 1146-1185 (LRRESSRSPSPVTHASKSRSLHRGSRKLEFSEESDSTEDE) form a disordered region. A phosphoserine mark is found at Ser-1153 and Ser-1155. Positions 1161 to 1170 (SKSRSLHRGS) are enriched in basic residues. Positions 1176–1185 (SEESDSTEDE) are enriched in acidic residues. Residues Ser-1181 and Ser-1242 each carry the phosphoserine modification. The interval 1259 to 1290 (SSQHSAALGSPANALSQDPDFNPPSKQRRHQA) is disordered. A phosphoserine mark is found at Ser-1298, Ser-1304, and Ser-1344. Thr-1351 is subject to Phosphothreonine. An interaction with PALB2 region spans residues 1354-1381 (RATMKDNLIKLQQEMAQLEAVLEQHGSQ). Disordered stretches follow at residues 1375–1486 (LEQH…QEEL) and 1498–1534 (PHNL…DSES). Residues Ser-1380, Ser-1414, and Ser-1482 each carry the phosphoserine modification. 2 stretches are compositionally biased toward polar residues: residues 1405-1426 (NRSG…SQNP) and 1473-1485 (RSLQ…SQEE). BRCT domains are found at residues 1588–1682 (PKER…EFEV) and 1701–1800 (SQEK…AYLV).

In terms of assembly, heterodimer with BARD1. Part of the BRCA1-associated genome surveillance complex (BASC), which contains BRCA1, MSH2, MSH6, MLH1, ATM, BLM, PMS2 and the MRE11-RAD50-NBN protein (MRN) complex. This association could be a dynamic process changing throughout the cell cycle and within subnuclear domains. Component of the BRCA1-A complex, at least composed of BRCA1, BARD1, UIMC1/RAP80, ABRAXAS1, BRCC3/BRCC36, BABAM2 and BABAM1/NBA1. Interacts (via the BRCT domains) with ABRAXAS1 (phosphorylated form); this is important for recruitment to sites of DNA damage. Can form a heterotetramer with two molecules of ABRAXAS1 (phosphorylated form). Component of the BRCA1-RBBP8 complex. Interacts (via the BRCT domains) with RBBP8 ('Ser-327' phosphorylated form); the interaction ubiquitinates RBBP8, regulates CHEK1 activation, and involves RBBP8 in BRCA1-dependent G2/M checkpoint control on DNA damage. Associates with RNA polymerase II holoenzyme. Interacts with SMC1A, NELFB, DCLRE1C, CLSPN. CHEK1, CHEK2, BAP1, BRCC3, UBXN1 and PCLAF. Interacts (via BRCT domains) with BRIP1 (phosphorylated form). Interacts with FANCD2 (ubiquitinated form). Interacts with H2AX (phosphorylated on 'Ser-140'). Interacts (via the BRCT domains) with ACACA (phosphorylated form); the interaction prevents dephosphorylation of ACACA. Part of a BRCA complex containing BRCA1, BRCA2 and PALB2. Interacts directly with PALB2; the interaction is essential for its function in HRR. Interacts directly with BRCA2; the interaction occurs only in the presence of PALB2 which serves as the bridging protein. Interacts (via the BRCT domains) with LMO4; the interaction represses the transcriptional activity of BRCA1. Interacts (via the BRCT domains) with CCAR2 (via N-terminus); the interaction represses the transcriptional activator activity of BRCA1. Interacts with EXD2. Interacts (via C-terminus) with DHX9; this interaction is direct and links BRCA1 to the RNA polymerase II holoenzyme. Interacts with DNA helicase ZGRF1; the interaction is increased following DNA damage induction. Post-translationally, phosphorylated in response to IR, UV, and various stimuli that cause checkpoint activation, probably by ATM or ATR. Phosphorylation at Ser-975 by CHEK2 regulates mitotic spindle assembly. Phosphorylation by AURKA regulates centrosomal microtubule nucleation. In terms of processing, autoubiquitinated, undergoes 'Lys-6'-linked polyubiquitination. 'Lys-6'-linked polyubiquitination does not promote degradation.

It is found in the nucleus. The protein localises to the chromosome. Its subcellular location is the cytoplasm. The catalysed reaction is S-ubiquitinyl-[E2 ubiquitin-conjugating enzyme]-L-cysteine + [acceptor protein]-L-lysine = [E2 ubiquitin-conjugating enzyme]-L-cysteine + N(6)-ubiquitinyl-[acceptor protein]-L-lysine.. It functions in the pathway protein modification; protein ubiquitination. Functionally, E3 ubiquitin-protein ligase that specifically mediates the formation of 'Lys-6'-linked polyubiquitin chains and plays a central role in DNA repair by facilitating cellular responses to DNA damage. It is unclear whether it also mediates the formation of other types of polyubiquitin chains. The BRCA1-BARD1 heterodimer coordinates a diverse range of cellular pathways such as DNA damage repair, ubiquitination and transcriptional regulation to maintain genomic stability. Regulates centrosomal microtubule nucleation. Required for appropriate cell cycle arrests after ionizing irradiation in both the S-phase and the G2 phase of the cell cycle. Required for FANCD2 targeting to sites of DNA damage. Inhibits lipid synthesis by binding to inactive phosphorylated ACACA and preventing its dephosphorylation. Contributes to homologous recombination repair (HRR) via its direct interaction with PALB2, fine-tunes recombinational repair partly through its modulatory role in the PALB2-dependent loading of BRCA2-RAD51 repair machinery at DNA breaks. Component of the BRCA1-RBBP8 complex which regulates CHEK1 activation and controls cell cycle G2/M checkpoints on DNA damage via BRCA1-mediated ubiquitination of RBBP8. Acts as a transcriptional activator. This chain is Breast cancer type 1 susceptibility protein homolog (Brca1), found in Rattus norvegicus (Rat).